The chain runs to 441 residues: Trigger factor (441 aa).

Residues 175–260 (GDKVVIDYNS…LVSIMVPKDV (86 aa)) form the PPIase FKBP-type domain.

Belongs to the FKBP-type PPIase family. Tig subfamily.

It localises to the cytoplasm. It carries out the reaction [protein]-peptidylproline (omega=180) = [protein]-peptidylproline (omega=0). Its function is as follows. Involved in protein export. Acts as a chaperone by maintaining the newly synthesized protein in an open conformation. Functions as a peptidyl-prolyl cis-trans isomerase. In Anaplasma marginale (strain St. Maries), this protein is Trigger factor.